The chain runs to 22 residues: thr operon leader peptide (22 aa).

It belongs to the thr operon leader peptide family.

Functionally, this protein is involved in control of the biosynthesis of threonine. The protein is thr operon leader peptide of Yersinia enterocolitica serotype O:8 / biotype 1B (strain NCTC 13174 / 8081).